Consider the following 305-residue polypeptide: MQHPREENSIVVELEPSLATFIKQGFNNLVKWPLLNIGIVLSNTSTAVNEEWLTAVEHIPTMKIFYKHIHKILTREMGFLVYLKRSQSERDNYITLYDFDYYIIDKDTNSVTMVDKPTELKETLLHVFQEYRLKSSQTIELIAFSSGTVINEDIVSKLTFLDVEVFNREYNNVKTIIDPDFVFRSPFIVISPMGKLTFFVEVYSWFDFKSCLKDIIDFLEGALIANIHNHMIKVGNCDETVSSYNPESGMLFVNDLMTMNIVNFFGCNSRLESYHRFDMTKVDVELFIKALSDACKKILSASNRL.

It belongs to the poxviridae DNA-directed RNA polymerase 35 kDa subunit family. In terms of assembly, the DNA-dependent RNA polymerase used for intermediate and late genes expression consists of eight subunits 147 kDa, 133 kDa, 35 kDa, 30 kDa, 22 kDa, 19 kDa, 18 kDa and 7 kDa totalling more than 500 kDa in mass. The same holoenzyme, with the addition of the transcription-specificity factor RAP94, is used for early gene expression.

The protein resides in the virion. The enzyme catalyses RNA(n) + a ribonucleoside 5'-triphosphate = RNA(n+1) + diphosphate. Its function is as follows. Part of the DNA-dependent RNA polymerase which catalyzes the transcription of viral DNA into RNA using the four ribonucleoside triphosphates as substrates. Responsible for the transcription of early, intermediate and late genes. DNA-dependent RNA polymerase associates with the early transcription factor (ETF), itself composed of D6 and A7, thereby allowing the early genes transcription. Late transcription, and probably also intermediate transcription, require newly synthesized RNA polymerase. This chain is DNA-directed RNA polymerase 35 kDa subunit (OPG156), found in Bos taurus (Bovine).